A 171-amino-acid polypeptide reads, in one-letter code: Myosin regulatory light chain 12A (171 aa).

Phosphothreonine; by MLCK is present on threonine 18. Phosphoserine; by MLCK is present on serine 19. 3 EF-hand domains span residues 28–63 (SQIQEFKEAFNMIDQNRDGFIDKEDLHDMLASLGKN), 97–132 (DPEDVIRNAFACFDEEATGTIQEDYLRELLTTMGDR), and 133–168 (FTDEEVDELYREAPIDKKGNFNYIEFTRILKHGAKD). Positions 41, 43, 45, and 52 each coordinate Ca(2+).

As to quaternary structure, myosin is a hexamer of 2 heavy chains and 4 light chains. In terms of processing, phosphorylation increases the actin-activated myosin ATPase activity and thereby regulates the contractile activity. It is required to generate the driving force in the migration of the cells but not necessary for localization of myosin-2 at the leading edge.

Myosin regulatory subunit that plays an important role in regulation of both smooth muscle and nonmuscle cell contractile activity via its phosphorylation. Implicated in cytokinesis, receptor capping, and cell locomotion. In Homo sapiens (Human), this protein is Myosin regulatory light chain 12A (MYL12A).